Reading from the N-terminus, the 472-residue chain is Chromosomal replication initiator protein DnaA (472 aa).

Positions 1–73 are domain I, interacts with DnaA modulators; it reads MSNMEQDRWS…LSCWQAELPE (73 aa). The interval 73 to 128 is domain II; that stretch reads EVNRVDLTVRSPVRCAAPAKEAPAPVESRRDEQRPSAERSNGATPVSANHDALGGS. A disordered region spans residues 89–124; that stretch reads APAKEAPAPVESRRDEQRPSAERSNGATPVSANHDA. The span at 99 to 109 shows a compositional bias: basic and acidic residues; sequence ESRRDEQRPSA. Residues 110–119 show a composition bias toward polar residues; sequence ERSNGATPVS. Positions 129 to 351 are domain III, AAA+ region; it reads PLDPRLTFAS…GAINRLLAHS (223 aa). ATP contacts are provided by Gly176, Gly178, Lys179, and Thr180. The tract at residues 352–472 is domain IV, binds dsDNA; sequence KLNNQPVTLE…VESLKRQLQE (121 aa).

This sequence belongs to the DnaA family. Oligomerizes as a right-handed, spiral filament on DNA at oriC.

Its subcellular location is the cytoplasm. Its function is as follows. Plays an essential role in the initiation and regulation of chromosomal replication. ATP-DnaA binds to the origin of replication (oriC) to initiate formation of the DNA replication initiation complex once per cell cycle. Binds the DnaA box (a 9 base pair repeat at the origin) and separates the double-stranded (ds)DNA. Forms a right-handed helical filament on oriC DNA; dsDNA binds to the exterior of the filament while single-stranded (ss)DNA is stabiized in the filament's interior. The ATP-DnaA-oriC complex binds and stabilizes one strand of the AT-rich DNA unwinding element (DUE), permitting loading of DNA polymerase. After initiation quickly degrades to an ADP-DnaA complex that is not apt for DNA replication. Binds acidic phospholipids. This chain is Chromosomal replication initiator protein DnaA, found in Rhodopseudomonas palustris (strain TIE-1).